A 487-amino-acid polypeptide reads, in one-letter code: Protein SMG9 (487 aa).

2 disordered regions span residues 30–83 and 136–164; these read EDAA…PPAL and RDKGSCSGGAGTAGTSAGAPNALQELQPP. Residues 42–70 show a composition bias toward basic and acidic residues; it reads LKKDRDREQETWDRERDKDRKLERDREAE.

Belongs to the SMG9 family.

Functionally, involved in nonsense-mediated decay (NMD) of mRNAs containing premature stop codons. Probable component of kinase complex containing nonC and recruited to stalled ribosomes. The chain is Protein SMG9 from Drosophila melanogaster (Fruit fly).